The following is a 578-amino-acid chain: Isocitrate dehydrogenase kinase/phosphatase (578 aa).

ATP-binding positions include 315 to 321 and K336; that span reads APGIRGM. D371 is a catalytic residue.

This sequence belongs to the AceK family.

The protein resides in the cytoplasm. It catalyses the reaction L-seryl-[isocitrate dehydrogenase] + ATP = O-phospho-L-seryl-[isocitrate dehydrogenase] + ADP + H(+). In terms of biological role, bifunctional enzyme which can phosphorylate or dephosphorylate isocitrate dehydrogenase (IDH) on a specific serine residue. This is a regulatory mechanism which enables bacteria to bypass the Krebs cycle via the glyoxylate shunt in response to the source of carbon. When bacteria are grown on glucose, IDH is fully active and unphosphorylated, but when grown on acetate or ethanol, the activity of IDH declines drastically concomitant with its phosphorylation. This is Isocitrate dehydrogenase kinase/phosphatase from Shigella boydii serotype 18 (strain CDC 3083-94 / BS512).